Here is a 37-residue protein sequence, read N- to C-terminus: Kappa-actitoxin-Bgr1a (37 aa).

A ShKT domain is found at 2–37; it reads CRDWFKETACRHAKSLGNCRTSQKYRANCAKTCELC. Intrachain disulfides connect cysteine 2–cysteine 37, cysteine 11–cysteine 30, and cysteine 20–cysteine 34. Residues 25–26 form a crucial for binding to potassium channels region; that stretch reads KY.

Belongs to the sea anemone type 1 potassium channel toxin family. Type 1b subfamily.

Its subcellular location is the secreted. The protein resides in the nematocyst. Inhibits voltage-dependent potassium channels of the Kv1 family (Kv1.1/KCNA1 (Kd=6 nM), Kv1.2/KCNA2 (Kd=15 nM), Kv1.3/KCNA3 (Kd=10-39 nM), Kv1.6/KCNA6, and KCa3.1/KCNN4 (Kd=172 nM)). The polypeptide is Kappa-actitoxin-Bgr1a (Bunodosoma granuliferum (Red warty sea anemone)).